We begin with the raw amino-acid sequence, 295 residues long: Proline iminopeptidase (295 aa).

The 245-residue stretch at threonine 35–aspartate 279 folds into the AB hydrolase-1 domain. Catalysis depends on serine 107, which acts as the Nucleophile. Aspartate 246 is an active-site residue. Histidine 273 (proton donor) is an active-site residue.

Belongs to the peptidase S33 family. Part of the tricorn proteolytic complex.

The catalysed reaction is Release of N-terminal proline from a peptide.. In terms of biological role, cleaves H-Pro-AMC as well as a wide spectrum of amino acid substrates and several peptide substrates without a proline at the N-terminus. In conjunction with the three factors F1, F2 and F3, Tricorn degrades oligopeptides in a sequential manner, yielding free amino acids. This Thermoplasma volcanium (strain ATCC 51530 / DSM 4299 / JCM 9571 / NBRC 15438 / GSS1) protein is Proline iminopeptidase (pip).